A 112-amino-acid chain; its full sequence is T cell receptor alpha variable 30 (112 aa).

The signal sequence occupies residues 1-21; it reads METLLKVLSGTLLWQLTWVRS. One can recognise an Ig-like domain in the interval 24–112; that stretch reads PVQSPQAVIL…YSGTYFCGTE (89 aa). N-linked (GlcNAc...) asparagine glycosylation occurs at Asn42. A disulfide bridge links Cys43 with Cys109.

Alpha-beta TR is a heterodimer composed of an alpha and beta chain; disulfide-linked. The alpha-beta TR is associated with the transmembrane signaling CD3 coreceptor proteins to form the TR-CD3 (TcR or TCR). The assembly of alpha-beta TR heterodimers with CD3 occurs in the endoplasmic reticulum where a single alpha-beta TR heterodimer associates with one CD3D-CD3E heterodimer, one CD3G-CD3E heterodimer and one CD247 homodimer forming a stable octameric structure. CD3D-CD3E and CD3G-CD3E heterodimers preferentially associate with TR alpha and TR beta chains, respectively. The association of the CD247 homodimer is the last step of TcR assembly in the endoplasmic reticulum and is required for transport to the cell surface.

The protein localises to the cell membrane. Its function is as follows. V region of the variable domain of T cell receptor (TR) alpha chain that participates in the antigen recognition. Alpha-beta T cell receptors are antigen specific receptors which are essential to the immune response and are present on the cell surface of T lymphocytes. Recognize peptide-major histocompatibility (MH) (pMH) complexes that are displayed by antigen presenting cells (APC), a prerequisite for efficient T cell adaptive immunity against pathogens. Binding of alpha-beta TR to pMH complex initiates TR-CD3 clustering on the cell surface and intracellular activation of LCK that phosphorylates the ITAM motifs of CD3G, CD3D, CD3E and CD247 enabling the recruitment of ZAP70. In turn ZAP70 phosphorylates LAT, which recruits numerous signaling molecules to form the LAT signalosome. The LAT signalosome propagates signal branching to three major signaling pathways, the calcium, the mitogen-activated protein kinase (MAPK) kinase and the nuclear factor NF-kappa-B (NF-kB) pathways, leading to the mobilization of transcription factors that are critical for gene expression and essential for T cell growth and differentiation. The T cell repertoire is generated in the thymus, by V-(D)-J rearrangement. This repertoire is then shaped by intrathymic selection events to generate a peripheral T cell pool of self-MH restricted, non-autoaggressive T cells. Post-thymic interaction of alpha-beta TR with the pMH complexes shapes TR structural and functional avidity. This chain is T cell receptor alpha variable 30, found in Homo sapiens (Human).